We begin with the raw amino-acid sequence, 285 residues long: Protein phosphatase 1 regulatory subunit 3B (285 aa).

The PP1-binding motif signature appears at 62-65 (RVSF). In terms of domain architecture, CBM21 spans 125 to 233 (RNRLQADHVC…SNRGKNYRII (109 aa)). Phosphoserine is present on Ser-261.

In terms of assembly, interacts with glycogen, PPP1CC catalytic subunit of PP1 and PYGL. Associates with glycogen particles. Forms complexes with debranching enzyme, glycogen phosphorylase, glycogen synthase and phosphorylase kinase which is necessary for its regulation of PP1 activity. As to expression, highly expressed in the liver and, at lower levels, in skeletal muscle, including in vastus lateralis, gastrocnemius and soleus (at protein level). Highest mRNA levels are observed in skeletal muscle, and only moderate levels in liver and heart. Weak expression in placenta and lung.

In terms of biological role, acts as a glycogen-targeting subunit for phosphatase PP1. Facilitates interaction of the PP1 with enzymes of the glycogen metabolism and regulates its activity. Suppresses the rate at which PP1 dephosphorylates (inactivates) glycogen phosphorylase and enhances the rate at which it activates glycogen synthase and therefore limits glycogen breakdown. Its activity is inhibited by PYGL, resulting in inhibition of the glycogen synthase and glycogen phosphorylase phosphatase activities of PP1. Dramatically increases basal and insulin-stimulated glycogen synthesis upon overexpression in hepatocytes. The sequence is that of Protein phosphatase 1 regulatory subunit 3B (PPP1R3B) from Homo sapiens (Human).